The sequence spans 62 residues: Large ribosomal subunit protein uL29 (62 aa).

Belongs to the universal ribosomal protein uL29 family.

The polypeptide is Large ribosomal subunit protein uL29 (Geobacter sulfurreducens (strain ATCC 51573 / DSM 12127 / PCA)).